We begin with the raw amino-acid sequence, 321 residues long: Phosphopantothenate--cysteine ligase 1 (321 aa).

The protein belongs to the PPC synthetase family. In terms of assembly, homodimer.

The enzyme catalyses (R)-4'-phosphopantothenate + L-cysteine + CTP = N-[(R)-4-phosphopantothenoyl]-L-cysteine + CMP + diphosphate + H(+). Its pathway is cofactor biosynthesis; coenzyme A biosynthesis; CoA from (R)-pantothenate: step 2/5. Functionally, catalyzes the first step in the biosynthesis of coenzyme A from vitamin B5, where cysteine is conjugated to 4'-phosphopantothenate to form 4-phosphopantothenoylcysteine. The protein is Phosphopantothenate--cysteine ligase 1 of Oryza sativa subsp. japonica (Rice).